The sequence spans 199 residues: Pre-histone-like nucleoprotein (199 aa).

Ser-2 is modified (N-acetylserine; by host). A propeptide spanning residues 2 to 23 (SILISPSDNTGWGLGTGKMYGG) is cleaved from the precursor. Lys-26 carries the N6-acetyllysine; by host modification. The Nuclear localization signal motif lies at 189 to 199 (RRKASVRRRRT).

The protein belongs to the adenoviridae histone-like nucleoprotein family. Interacts with the core-capsid bridging protein; this interaction bridges the virus core to the capsid. Interacts with host NPM1; this interaction might play a role in placing the pre-histone-like nucleoprotein on the viral DNA or regulating viral gene expression. Interacts with host HMGB1; this interaction inhibits host immune response. In terms of processing, cleaved near the N-terminus by the viral protease during virion maturation to form the mature protein.

The protein localises to the virion. It localises to the host nucleus. Its subcellular location is the host nucleolus. Its function is as follows. Plays a role in the inhibition of host immune response within the nucleus. Interacts with cellular nucleosomes and immobilizes the host immune danger signal HMGB1 on chromatin. In turn, prevents HMGB1 release out of the cell and thus decreases inflammation. Also plays a role in the wrapping and condensation of the viral DNA. May also promote viral genome import into the nucleus. The protein is Pre-histone-like nucleoprotein of Murine adenovirus A serotype 1 (MAdV-1).